A 217-amino-acid chain; its full sequence is Large ribosomal subunit protein uL3 (217 aa).

The protein belongs to the universal ribosomal protein uL3 family. Part of the 50S ribosomal subunit. Forms a cluster with proteins L14 and L19.

Functionally, one of the primary rRNA binding proteins, it binds directly near the 3'-end of the 23S rRNA, where it nucleates assembly of the 50S subunit. This Mycobacterium sp. (strain KMS) protein is Large ribosomal subunit protein uL3.